The primary structure comprises 247 residues: MSAHASTSAAANEARGRRSAEDVEYSKTHFRVCRFITETGVKLGMRSVPMATACVLYHRFFQSASLQIYEPYLVAMSAIHLAGKVEEQHLRTRDIINVCHRYFHPDSEPLELNGKFWELRDSIVQCELLILRQLNFQVTFEHPHKYLLHYLLSVRSLLNRHAWSRTPIAETALAVLKDSYHGSVCVRHRPQHLALTALYLALQTYGVQLPRGELEWWQVVCADITKAQIETIMSELLQLYDMEAKCT.

It belongs to the cyclin family. Cyclin-like FAM58 subfamily.

Its function is as follows. May be an activating cyclin for the cyclin-associated kinase CDK10. The sequence is that of Cyclin-Q (ccnq) from Danio rerio (Zebrafish).